A 338-amino-acid chain; its full sequence is UPF0194 membrane protein in asrC 5'region (338 aa).

An N-terminal signal peptide occupies residues 1-23 (MAISPKKRALALVVVLIVAGAVA). Positions 148–207 (KQSLDNAAAALKTARANLDRAQQALTLAIKGPRKEDIAAARQQLQADKAGLSLARRELTD) form a coiled coil.

It belongs to the UPF0194 family.

It localises to the periplasm. This is UPF0194 membrane protein in asrC 5'region from Acidithiobacillus ferridurans.